The sequence spans 176 residues: UBA-like domain-containing protein 1 (176 aa).

Composition is skewed to low complexity over residues 88 to 105 (ESFH…TSAT) and 120 to 137 (TPSW…QHLQ). Residues 88-176 (ESFHSGGSSG…RAHPAMEAER (89 aa)) form a disordered region. Over residues 138 to 150 (PQPPLWTPAPPSP) the composition is skewed to pro residues. A compositionally biased stretch (basic and acidic residues) spans 166–176 (PRAHPAMEAER).

The protein belongs to the UBALD family.

The chain is UBA-like domain-containing protein 1 (Ubald1) from Rattus norvegicus (Rat).